The primary structure comprises 234 residues: Sugar fermentation stimulation protein homolog (234 aa).

It belongs to the SfsA family.

The sequence is that of Sugar fermentation stimulation protein homolog from Shewanella sp. (strain MR-4).